A 513-amino-acid chain; its full sequence is ATP synthase subunit alpha (513 aa).

ATP is bound at residue 169-176 (GDRQTGKT).

Belongs to the ATPase alpha/beta chains family. As to quaternary structure, F-type ATPases have 2 components, CF(1) - the catalytic core - and CF(0) - the membrane proton channel. CF(1) has five subunits: alpha(3), beta(3), gamma(1), delta(1), epsilon(1). CF(0) has three main subunits: a(1), b(2) and c(9-12). The alpha and beta chains form an alternating ring which encloses part of the gamma chain. CF(1) is attached to CF(0) by a central stalk formed by the gamma and epsilon chains, while a peripheral stalk is formed by the delta and b chains.

The protein localises to the cell inner membrane. The catalysed reaction is ATP + H2O + 4 H(+)(in) = ADP + phosphate + 5 H(+)(out). Functionally, produces ATP from ADP in the presence of a proton gradient across the membrane. The alpha chain is a regulatory subunit. The protein is ATP synthase subunit alpha of Salmonella paratyphi C (strain RKS4594).